A 260-amino-acid polypeptide reads, in one-letter code: tRNA pseudouridine synthase A (260 aa).

Asp52 serves as the catalytic Nucleophile. Tyr110 is a substrate binding site.

The protein belongs to the tRNA pseudouridine synthase TruA family. As to quaternary structure, homodimer.

The catalysed reaction is uridine(38/39/40) in tRNA = pseudouridine(38/39/40) in tRNA. In terms of biological role, formation of pseudouridine at positions 38, 39 and 40 in the anticodon stem and loop of transfer RNAs. The polypeptide is tRNA pseudouridine synthase A (Spiroplasma kunkelii).